Consider the following 443-residue polypeptide: Citrate transporter CitP (443 aa).

13 consecutive transmembrane segments (helical) span residues 27-47 (ISGI…IAIS), 59-79 (IFAL…LPIF), 83-103 (LGGG…TNVM), 114-134 (FING…SSLF), 151-171 (VAFI…VIIG), 177-197 (AILY…IVPL), 209-229 (SAGI…LAII), 268-288 (YVQL…GTML), 294-314 (GINA…FGLL), 322-342 (VIMF…AGVG), 350-370 (VLLA…IVAI), 388-410 (AAIT…VLAA), and 422-442 (MGNR…VTFM).

The protein belongs to the 2-hydroxycarboxylate transporter (2-HCT) (TC 2.A.24) family.

The protein resides in the cell membrane. It catalyses the reaction (R)-lactate(in) + citrate(out) = (R)-lactate(out) + citrate(in). It carries out the reaction (S)-lactate(in) + citrate(out) = (S)-lactate(out) + citrate(in). The catalysed reaction is citrate(in) + H(+)(in) = citrate(out) + H(+)(out). With respect to regulation, uptake of citrate is not affected by the absence or presence of Na(+) up to 25 mM and is increasingly inhibited by increasing Mg(2+) concentrations. Its function is as follows. Secondary transporter involved in citrate metabolism. During cometabolism of citrate and glucose, catalyzes the uptake of divalent citrate into the cell coupled to the exit of monovalent lactate, a product of citrate fermentation during citrate-glucose cometabolism (precursor/product exchange). The citrate/lactate exchange is electrogenic and results in the generation of a membrane potential. In the absence of glucose, i.e. when no lactate is produced, CitP catalyzes the proton-dependent transport of citrate and malate. Transports the divalent form of citrate and malate with the concomitant uptake of one proton, therefore translocating a single unit of negative charge across the membrane. In vitro, transports a range of substrates that contain the 2-hydroxycarboxylate motif, HO-CR(2)-COO(-), with a preference for malate, citrate and monovalent 2-hydroxyisobutyrate. Modification of the OH or the COO(-) groups of the 2-hydroxycarboxylate motif drastically reduces the affinity of the transporter for the substrates, indicating their relevance in substrate recognition. Significant activity is also observed with some 2-oxocarboxylates and a 3-hydroxycarboxylate. The protein is Citrate transporter CitP of Leuconostoc mesenteroides subsp. mesenteroides.